The sequence spans 744 residues: Polyribonucleotide nucleotidyltransferase (744 aa).

Residues Asp487 and Asp493 each contribute to the Mg(2+) site. Positions 554-613 (PSTTTLKVDKDKIRDIIGPGGKVIKEICETSGAKIDISDDGTVSIYASDKDKLKVALDKV) constitute a KH domain. Residues 623 to 691 (GEVFNGTVMK…NKGKAKLTIK (69 aa)) form the S1 motif domain. The segment at 691-744 (KNAEKDKSSANPKPKNSPKEHQEPEKRDNGKKRAWNEDNNAETTEVVTERKYFS) is disordered. The segment covering 707 to 718 (SPKEHQEPEKRD) has biased composition (basic and acidic residues). The segment covering 727–736 (EDNNAETTEV) has biased composition (polar residues).

It belongs to the polyribonucleotide nucleotidyltransferase family. Mg(2+) serves as cofactor.

The protein localises to the cytoplasm. The enzyme catalyses RNA(n+1) + phosphate = RNA(n) + a ribonucleoside 5'-diphosphate. Functionally, involved in mRNA degradation. Catalyzes the phosphorolysis of single-stranded polyribonucleotides processively in the 3'- to 5'-direction. This Rickettsia bellii (strain OSU 85-389) protein is Polyribonucleotide nucleotidyltransferase.